The sequence spans 503 residues: Carboxyl-terminal PDZ ligand of neuronal nitric oxide synthase protein (503 aa).

The 166-residue stretch at 26–191 (FQHGISFEAK…ESERNSDGSG (166 aa)) folds into the PID domain. Positions 170–212 (HTQQNADGQEDGESERNSDGSGDPGRQLTGAERVSTAAAEETD) are disordered. 4 positions are modified to phosphoserine: serine 183, serine 187, serine 190, and serine 262. Residues 318–359 (AAEAAARLEAQARVHQLLLQNKDMLQHISLLVKQVQELELKL) are a coiled coil. A phosphoserine mark is found at serine 367, serine 370, serine 397, and serine 413. The segment at 491 to 503 (QELGDSLDDEIAV) is interaction with NOS1. The short motif at 501–503 (IAV) is the PDZ-binding element.

As to quaternary structure, interacts with the PDZ domain of NOS1 or the second PDZ domain of DLG4 through its C-terminus. Interacts with RASD1 and SYN1, SYN2 and SYN3 via its PID domain. Forms a ternary complex with NOS1 and SYN1. Forms a ternary complex with NOS1 and RASD1.

The protein localises to the cell projection. It localises to the filopodium. The protein resides in the podosome. Adapter protein involved in neuronal nitric-oxide (NO) synthesis regulation via its association with nNOS/NOS1. The complex formed with NOS1 and synapsins is necessary for specific NO and synapsin functions at a presynaptic level. Mediates an indirect interaction between NOS1 and RASD1 leading to enhance the ability of NOS1 to activate RASD1. Competes with DLG4 for interaction with NOS1, possibly affecting NOS1 activity by regulating the interaction between NOS1 and DLG4. In kidney podocytes, plays a role in podosomes and filopodia formation through CDC42 activation. The protein is Carboxyl-terminal PDZ ligand of neuronal nitric oxide synthase protein of Mus musculus (Mouse).